Here is a 383-residue protein sequence, read N- to C-terminus: BRISC and BRCA1-A complex member 2 (383 aa).

Met1 carries the N-acetylmethionine modification. Ser2 carries the phosphoserine modification. UEV-like regions lie at residues 30-147 (DATN…TLLE) and 275-364 (IAAF…RAKA).

Belongs to the BABAM2 family. Component of the ARISC complex, at least composed of UIMC1/RAP80, ABRAXAS1, BRCC3/BRCC36, BABAM2 and BABAM1/NBA1. Component of the BRCA1-A complex, at least composed of BRCA1, BARD1, UIMC1/RAP80, ABRAXAS1, BRCC3/BRCC36, BABAM2 and BABAM1/NBA1. In the BRCA1-A complex, interacts directly with ABRAXAS1, BRCC3/BRCC36 and BABAM1/NBA1. Binds polyubiquitin. Component of the BRISC complex, at least composed of ABRAXAS2, BRCC3/BRCC36, BABAM2 and BABAM1/NBA1. Identified in a complex with SHMT2 and the other subunits of the BRISC complex. Component of the BRCA1/BRCA2 containing complex (BRCC), which also contains BRCA1, BRCA2, BARD1, BRCC3/BRCC36 and RAD51. BRCC is a ubiquitin E3 ligase complex that enhances cellular survival following DNA damage. May interact with FAS and TNFRSF1A.

It localises to the cytoplasm. The protein localises to the nucleus. In terms of biological role, component of the BRCA1-A complex, a complex that specifically recognizes 'Lys-63'-linked ubiquitinated histones H2A and H2AX at DNA lesions sites, leading to target the BRCA1-BARD1 heterodimer to sites of DNA damage at double-strand breaks (DSBs). The BRCA1-A complex also possesses deubiquitinase activity that specifically removes 'Lys-63'-linked ubiquitin on histones H2A and H2AX. In the BRCA1-A complex, it acts as an adapter that bridges the interaction between BABAM1/NBA1 and the rest of the complex, thereby being required for the complex integrity and modulating the E3 ubiquitin ligase activity of the BRCA1-BARD1 heterodimer. Component of the BRISC complex, a multiprotein complex that specifically cleaves 'Lys-63'-linked ubiquitin in various substrates. Within the BRISC complex, acts as an adapter that bridges the interaction between BABAM1/NBA1 and the rest of the complex, thereby being required for the complex integrity. The BRISC complex is required for normal mitotic spindle assembly and microtubule attachment to kinetochores via its role in deubiquitinating NUMA1. The BRISC complex plays a role in interferon signaling via its role in the deubiquitination of the interferon receptor IFNAR1; deubiquitination increases IFNAR1 activity by enhancing its stability and cell surface expression. Down-regulates the response to bacterial lipopolysaccharide (LPS) via its role in IFNAR1 deubiquitination. May play a role in homeostasis or cellular differentiation in cells of neural, epithelial and germline origins. May also act as a death receptor-associated anti-apoptotic protein, which inhibits the mitochondrial apoptotic pathway. May regulate TNF-alpha signaling through its interactions with TNFRSF1A; however these effects may be indirect. In Rattus norvegicus (Rat), this protein is BRISC and BRCA1-A complex member 2.